The following is a 279-amino-acid chain: Ribosomal RNA small subunit methyltransferase I (279 aa).

Belongs to the methyltransferase superfamily. RsmI family.

The protein resides in the cytoplasm. It catalyses the reaction cytidine(1402) in 16S rRNA + S-adenosyl-L-methionine = 2'-O-methylcytidine(1402) in 16S rRNA + S-adenosyl-L-homocysteine + H(+). Its function is as follows. Catalyzes the 2'-O-methylation of the ribose of cytidine 1402 (C1402) in 16S rRNA. The protein is Ribosomal RNA small subunit methyltransferase I of Synechocystis sp. (strain ATCC 27184 / PCC 6803 / Kazusa).